The following is a 436-amino-acid chain: Trigger factor (436 aa).

A PPIase FKBP-type domain is found at 163–248; that stretch reads GDQVIIDFVG…VHSVQTKVLP (86 aa).

It belongs to the FKBP-type PPIase family. Tig subfamily.

It localises to the cytoplasm. It carries out the reaction [protein]-peptidylproline (omega=180) = [protein]-peptidylproline (omega=0). Functionally, involved in protein export. Acts as a chaperone by maintaining the newly synthesized protein in an open conformation. Functions as a peptidyl-prolyl cis-trans isomerase. The polypeptide is Trigger factor (Hydrogenovibrio crunogenus (strain DSM 25203 / XCL-2) (Thiomicrospira crunogena)).